We begin with the raw amino-acid sequence, 467 residues long: tRNA-2-methylthio-N(6)-dimethylallyladenosine synthase (467 aa).

Residues 1–20 (MSDDTTQIEPAMAQETSPRA) are disordered. Positions 23–143 (RKVFVKTYGC…LPNALARVRG (121 aa)) constitute an MTTase N-terminal domain. 6 residues coordinate [4Fe-4S] cluster: cysteine 32, cysteine 68, cysteine 106, cysteine 184, cysteine 188, and cysteine 191. One can recognise a Radical SAM core domain in the interval 170–402 (RKRGVSAFLT…QALLSAQQYA (233 aa)). Positions 405-467 (DSMIGRKMDV…TNSLIAQKLA (63 aa)) constitute a TRAM domain.

Belongs to the methylthiotransferase family. MiaB subfamily. Monomer. Requires [4Fe-4S] cluster as cofactor.

It localises to the cytoplasm. It carries out the reaction N(6)-dimethylallyladenosine(37) in tRNA + (sulfur carrier)-SH + AH2 + 2 S-adenosyl-L-methionine = 2-methylsulfanyl-N(6)-dimethylallyladenosine(37) in tRNA + (sulfur carrier)-H + 5'-deoxyadenosine + L-methionine + A + S-adenosyl-L-homocysteine + 2 H(+). Its function is as follows. Catalyzes the methylthiolation of N6-(dimethylallyl)adenosine (i(6)A), leading to the formation of 2-methylthio-N6-(dimethylallyl)adenosine (ms(2)i(6)A) at position 37 in tRNAs that read codons beginning with uridine. The chain is tRNA-2-methylthio-N(6)-dimethylallyladenosine synthase from Brucella abortus (strain S19).